The following is a 206-amino-acid chain: High frequency lysogenization protein HflD homolog (206 aa).

Belongs to the HflD family.

Its subcellular location is the cytoplasm. It is found in the cell inner membrane. This chain is High frequency lysogenization protein HflD homolog, found in Pseudomonas aeruginosa (strain LESB58).